The sequence spans 467 residues: UDP-N-acetylmuramate--L-alanine ligase (467 aa).

Residue 114 to 120 (GTHGKTT) participates in ATP binding.

This sequence belongs to the MurCDEF family.

It localises to the cytoplasm. It carries out the reaction UDP-N-acetyl-alpha-D-muramate + L-alanine + ATP = UDP-N-acetyl-alpha-D-muramoyl-L-alanine + ADP + phosphate + H(+). The protein operates within cell wall biogenesis; peptidoglycan biosynthesis. Its function is as follows. Cell wall formation. This Bradyrhizobium sp. (strain BTAi1 / ATCC BAA-1182) protein is UDP-N-acetylmuramate--L-alanine ligase.